Reading from the N-terminus, the 242-residue chain is uncharacterized protein (242 aa).

The S4 RNA-binding domain occupies 2-62 (EKAYKILSVQ…VEKPSVIFED (61 aa)). Residue D93 is part of the active site.

It belongs to the pseudouridine synthase RluA family.

The catalysed reaction is a uridine in RNA = a pseudouridine in RNA. This is an uncharacterized protein from Helicobacter pylori (strain ATCC 700392 / 26695) (Campylobacter pylori).